The chain runs to 101 residues: uncharacterized protein (101 aa).

3 helical membrane passes run 20–40 (KHFI…LLGL), 59–79 (GVIA…MYIA), and 81–101 (SEMW…ALFF).

It localises to the endoplasmic reticulum. The protein resides in the membrane. This is an uncharacterized protein from Saccharomyces cerevisiae (strain ATCC 204508 / S288c) (Baker's yeast).